A 733-amino-acid chain; its full sequence is Microtubule-associated protein tau (733 aa).

Positions 1–16 (MADPRQEFDTMEDHAG) are enriched in basic and acidic residues. The interval 1 to 548 (MADPRQEFDT…PVPMPDLKNV (548 aa)) is disordered. Position 2 is an N-acetylalanine (A2). Position 18 is a phosphotyrosine; by FYN (Y18). K33 participates in a covalent cross-link: Glycyl lysine isopeptide (Lys-Gly) (interchain with G-Cter in ubiquitin). S35 and S50 each carry phosphoserine. The segment covering 50–60 (SETSDAKSTPT) has biased composition (polar residues). Phosphothreonine occurs at positions 58, 60, and 100. R115 carries the omega-N-methylarginine modification. Residues 126-137 (SDWTRQQVSSMS) are compositionally biased toward polar residues. Residues 157-172 (RPEDIEKSHPASELLR) are compositionally biased toward basic and acidic residues. At S188 the chain carries Phosphoserine. Positions 189–202 (EEEVDEDLTVDESS) are enriched in acidic residues. Positions 203 to 212 (QDSPPSQASL) are enriched in polar residues. Basic and acidic residues-rich tracts occupy residues 270-294 (EEGH…KEQD) and 354-366 (ASKD…EKKA). Polar residues predominate over residues 413 to 427 (KHVSSVTPRNGSPGT). Residue T445 is modified to Phosphothreonine. R447 carries the omega-N-methylarginine modification. S451 carries the post-translational modification Phosphoserine. Residue K455 is modified to N6,N6-dimethyllysine; alternate. N6-acetyllysine; alternate is present on K455. T461, T467, and T468 each carry phosphothreonine. A Phosphoserine modification is found at S470. At T473 the chain carries Phosphothreonine. Phosphoserine is present on residues S477, S483, and S487. Over residues 479-506 (EPPKSGERSGYSSPGSPGTPGSRSRTPS) the composition is skewed to low complexity. Phosphotyrosine is present on Y489. A phosphoserine mark is found at S490, S491, and S494. Phosphothreonine occurs at positions 497 and 504. S506 is subject to Phosphoserine. Position 509 is a phosphothreonine (T509). N6-acetyllysine is present on K517. T523 carries the phosphothreonine modification. 3 positions are modified to phosphoserine: S527, S529, and S531. Tau/MAP repeat units lie at residues 536 to 566 (QTAP…GGGK), 567 to 597 (VQII…GGGS), 598 to 628 (VQIV…GGGQ), and 629 to 660 (VEVK…GGGN). K546 participates in a covalent cross-link: Glycyl lysine isopeptide (Lys-Gly) (interchain with G-Cter in ubiquitin). K551 is subject to N6-acetyllysine; alternate. K551 is modified (N6-methyllysine; alternate). K551 is covalently cross-linked (Glycyl lysine isopeptide (Lys-Gly) (interchain with G-Cter in ubiquitin); alternate). At S554 the chain carries Phosphoserine; by MARK1, BRSK1, BRSK2 and PHK. K559 is covalently cross-linked (Glycyl lysine isopeptide (Lys-Gly) (interchain with G-Cter in ubiquitin)). K573 is subject to N6-acetyllysine; alternate. A Glycyl lysine isopeptide (Lys-Gly) (interchain with G-Cter in ubiquitin); alternate cross-link involves residue K573. Phosphoserine occurs at positions 577 and 581. K582 bears the N6-acetyllysine mark. C583 and C614 are oxidised to a cystine. The residue at position 585 (S585) is a Phosphoserine. Residue K590 is modified to N6-acetyllysine; alternate. K590 is covalently cross-linked (Glycyl lysine isopeptide (Lys-Gly) (interchain with G-Cter in ubiquitin); alternate). S597 carries the phosphoserine modification. K603 is subject to N6,N6-dimethyllysine; alternate. Residues K603, K609, and K613 each carry the N6-acetyllysine; alternate modification. Residues K603, K609, and K613 each participate in a glycyl lysine isopeptide (Lys-Gly) (interchain with G-Cter in ubiquitin); alternate cross-link. The residue at position 616 (S616) is a Phosphoserine. An N6-acetyllysine; alternate mark is found at K623, K635, and K639. Residues K623, K635, and K639 each participate in a glycyl lysine isopeptide (Lys-Gly) (interchain with G-Cter in ubiquitin); alternate cross-link. Omega-N-methylarginine is present on R641. S644 carries the phosphoserine modification. Residue K645 forms a Glycyl lysine isopeptide (Lys-Gly) (interchain with G-Cter in ubiquitin) linkage. S648 is modified (phosphoserine). N6-acetyllysine; alternate is present on K661. Residue K661 forms a Glycyl lysine isopeptide (Lys-Gly) (interchain with G-Cter in ubiquitin); alternate linkage. Residue K667 forms a Glycyl lysine isopeptide (Lys-Gly) (interchain with G-Cter in ubiquitin) linkage. K677 carries the post-translational modification N6-acetyllysine; alternate. A Glycyl lysine isopeptide (Lys-Gly) (interchain with G-Cter in ubiquitin); alternate cross-link involves residue K677. At Y686 the chain carries Phosphotyrosine. S688 carries the post-translational modification Phosphoserine. The tract at residues 690 to 709 (VVSGDTSPRHLSNVSSTGSI) is disordered. S692 carries the phosphoserine; alternate modification. S692 carries an O-linked (GlcNAc...) serine; alternate glycan. A compositionally biased stretch (polar residues) spans 693–708 (GDTSPRHLSNVSSTGS). T695 carries the post-translational modification Phosphothreonine. A phosphoserine mark is found at S696, S701, S708, and S714. T719 carries the phosphothreonine modification.

As to quaternary structure, interacts with MARK1, MARK2, MARK3 and MARK4. Interacts with SQSTM1 when polyubiquitinated. Interacts with PSMC2 through SQSTM1. Interacts with FKBP4. Binds to CSNK1D. Interacts with SGK1. Interacts with EPM2A; the interaction dephosphorylates MAPT at Ser-369. Interacts with PIN1. Interacts with LRRK2. Interacts with LRP1, leading to endocytosis; this interaction is reduced in the presence of LRPAP1/RAP. In terms of processing, polyubiquitinated. Requires functional TRAF6 and may provoke SQSTM1-dependent degradation by the proteasome. Phosphorylation at various serine and threonine residues in S-P or T-P motifs by proline-directed protein kinases (PDPK1, CDK1, CDK5, GSK3, MAPK) (a few sites per protein in interphase, more in mitosis), and at serine residues in K-X-G-S motifs by MAP/microtubule affinity-regulating kinase (MARK1, MARK2, MARK3, MARK4), causing detachment from microtubules, and their disassembly. Phosphorylated by PHK. Dephosphorylation at several serine and threonine residues by the serine/threonine phosphatase PPP5C. Phosphorylation at Ser-554 by BRSK1 and BRSK2 in neurons affects ability to bind microtubules and plays a role in neuron polarization. Phosphorylation at Ser-188 by SGK1 mediates microtubule depolymerization and neurite formation in hippocampal neurons. As to expression, expressed in neurons and at a lower level in the liver and kidney. Isoform PNS-tau is expressed in the peripheral nervous system while the others are expressed in the central nervous system.

The protein localises to the cytoplasm. It localises to the cytosol. It is found in the cell membrane. Its subcellular location is the cytoskeleton. The protein resides in the cell projection. The protein localises to the axon. It localises to the dendrite. It is found in the secreted. Promotes microtubule assembly and stability, and might be involved in the establishment and maintenance of neuronal polarity. The C-terminus binds axonal microtubules while the N-terminus binds neural plasma membrane components, suggesting that tau functions as a linker protein between both. Axonal polarity is predetermined by tau localization (in the neuronal cell) in the domain of the cell body defined by the centrosome. The short isoforms allow plasticity of the cytoskeleton whereas the longer isoforms may preferentially play a role in its stabilization. In Mus musculus (Mouse), this protein is Microtubule-associated protein tau.